The chain runs to 424 residues: UPF0053 protein MG146 homolog (424 aa).

One can recognise a CNNM transmembrane domain in the interval 6–191 (SGGLLALIII…EQNGLFTKED (186 aa)). 4 helical membrane-spanning segments follow: residues 7–27 (GGLL…SAVV), 71–91 (LITI…ILFL), 101–121 (AISS…LCEI), and 135–155 (LVYF…ITKL). CBS domains are found at residues 210-270 (MIKW…NEPF) and 275-335 (LLYP…EHDE).

It belongs to the UPF0053 family.

The protein localises to the cell membrane. This is UPF0053 protein MG146 homolog from Mycoplasma pneumoniae (strain ATCC 29342 / M129 / Subtype 1) (Mycoplasmoides pneumoniae).